The primary structure comprises 142 residues: Spliceosomal protein DIB1 (142 aa).

This sequence belongs to the DIM1 family. In terms of assembly, component of the 25S [U4/U6.U5] tri-snRNP.

Its subcellular location is the nucleus. Functionally, essential role in pre-mRNA splicing. Also essential for entry into mitosis (G2/M progression) as well as for chromosome segregation during mitosis. This chain is Spliceosomal protein DIB1 (DIB1), found in Candida glabrata (strain ATCC 2001 / BCRC 20586 / JCM 3761 / NBRC 0622 / NRRL Y-65 / CBS 138) (Yeast).